The following is a 271-amino-acid chain: MAIITKVSAQKRQGRYNIFLDQEYAFSVSEKTLAEFVLLKGQELSPQKINEILDYEASAKASDLAARYLSYQPRTIKEVTDYLSQHEISRSAAKRAVNELTHLGYLDDAAYARLFVKNNLQVGKNGPGAVRRDLKKKGVDDDLIEAALADVTDEEWAGVGKRLVKSLLGQQGKIAKREVDRKMQTKLLSHGFSGSLAQAVTQDLVPEADEDQERAALVKQVLKAYKRFKRYEPGVREQKMRQYLYSHGFSGDEISAFLVGEIIPLEELEEY.

It belongs to the RecX family.

It is found in the cytoplasm. Its function is as follows. Modulates RecA activity. In Lactobacillus delbrueckii subsp. bulgaricus (strain ATCC 11842 / DSM 20081 / BCRC 10696 / JCM 1002 / NBRC 13953 / NCIMB 11778 / NCTC 12712 / WDCM 00102 / Lb 14), this protein is Regulatory protein RecX.